Consider the following 427-residue polypeptide: MFLCLIVGKPARGAEILDRLGFVRSKQNVLAIVLAGGEGKRLFPLTEDRAKPAVPFGGTYRLIDFVLSNLVNAGYLKICVLTQYKSHSLDRHISQAWQFSGPTSQYIASVPAQQRLGKRWYMGSADAILQSLNLVYDERPDYVLVFGADHVYRMDPEQMVADHIASGKAVTVAGIRVPRSEASAFGCIQADENNNITEFLEKPADPPGTPDDPSMTFASMGNYVFSTDALIQALKEDENNPDSEHDMGGDIIPYFVSMGQANVYDFNKNVVPGSTDRDRAYWRDVGTVDAFYEAHMDLISVHPVFNLYNQQWPIRSTERGDLPPAKFVQGGIAQASMVAQGSIVSGSTVRNSVVSTDVVVEEGATVEGSVIMPGARIGKGAVVRHCILDKNVVVSDGQVIGVDRERDEQRFQISPGGVVVVGKNFVV.

Alpha-D-glucose 1-phosphate-binding positions include Y121, G186, 201–202 (EK), and S219.

This sequence belongs to the bacterial/plant glucose-1-phosphate adenylyltransferase family. In terms of assembly, homotetramer.

It carries out the reaction alpha-D-glucose 1-phosphate + ATP + H(+) = ADP-alpha-D-glucose + diphosphate. The protein operates within glycan biosynthesis; glycogen biosynthesis. Functionally, involved in the biosynthesis of ADP-glucose, a building block required for the elongation reactions to produce glycogen. Catalyzes the reaction between ATP and alpha-D-glucose 1-phosphate (G1P) to produce pyrophosphate and ADP-Glc. The protein is Glucose-1-phosphate adenylyltransferase of Corynebacterium diphtheriae (strain ATCC 700971 / NCTC 13129 / Biotype gravis).